Consider the following 155-residue polypeptide: Ribosomal RNA large subunit methyltransferase H (155 aa).

S-adenosyl-L-methionine is bound by residues leucine 72, glycine 103, and 122 to 127 (LSALTL).

This sequence belongs to the RNA methyltransferase RlmH family. Homodimer.

Its subcellular location is the cytoplasm. The enzyme catalyses pseudouridine(1915) in 23S rRNA + S-adenosyl-L-methionine = N(3)-methylpseudouridine(1915) in 23S rRNA + S-adenosyl-L-homocysteine + H(+). Its function is as follows. Specifically methylates the pseudouridine at position 1915 (m3Psi1915) in 23S rRNA. The sequence is that of Ribosomal RNA large subunit methyltransferase H from Shigella boydii serotype 18 (strain CDC 3083-94 / BS512).